Reading from the N-terminus, the 136-residue chain is ATP synthase epsilon chain (136 aa).

It belongs to the ATPase epsilon chain family. In terms of assembly, F-type ATPases have 2 components, CF(1) - the catalytic core - and CF(0) - the membrane proton channel. CF(1) has five subunits: alpha(3), beta(3), gamma(1), delta(1), epsilon(1). CF(0) has three main subunits: a, b and c.

It localises to the cell membrane. Functionally, produces ATP from ADP in the presence of a proton gradient across the membrane. The protein is ATP synthase epsilon chain of Exiguobacterium sp. (strain ATCC BAA-1283 / AT1b).